Consider the following 110-residue polypeptide: Insulin (110 aa).

A signal peptide spans 1–24 (MALWTRLLPLLALLALLGPDPAQA). 3 disulfide bridges follow: C31/C96, C43/C109, and C95/C100. The propeptide at 57–87 (EVEEQQGGQVELGGGPGAGLPQPLALEMALQ) is c peptide.

This sequence belongs to the insulin family. As to quaternary structure, heterodimer of a B chain and an A chain linked by two disulfide bonds.

It is found in the secreted. Insulin decreases blood glucose concentration. It increases cell permeability to monosaccharides, amino acids and fatty acids. It accelerates glycolysis, the pentose phosphate cycle, and glycogen synthesis in liver. This Ictidomys tridecemlineatus (Thirteen-lined ground squirrel) protein is Insulin (INS).